Reading from the N-terminus, the 719-residue chain is Eukaryotic translation initiation factor 3 subunit B (719 aa).

The 88-residue stretch at 60–147 (NILVVDNLPV…HIFAVNMFDD (88 aa)) folds into the RRM domain. WD repeat units lie at residues 167–207 (VPGE…KPEL), 511–553 (LKGK…TMAS), and 555–598 (EHFM…LYRI). Residues 675–686 (EKMERQKLRDGE) are compositionally biased toward basic and acidic residues. The tract at residues 675 to 698 (EKMERQKLRDGEASDEEEEYEAKE) is disordered. The segment covering 687–698 (ASDEEEEYEAKE) has biased composition (acidic residues).

Belongs to the eIF-3 subunit B family. Component of the eukaryotic translation initiation factor 3 (eIF-3) complex.

It localises to the cytoplasm. Functionally, RNA-binding component of the eukaryotic translation initiation factor 3 (eIF-3) complex, which is involved in protein synthesis of a specialized repertoire of mRNAs and, together with other initiation factors, stimulates binding of mRNA and methionyl-tRNAi to the 40S ribosome. The eIF-3 complex specifically targets and initiates translation of a subset of mRNAs involved in cell proliferation. This Nicotiana tabacum (Common tobacco) protein is Eukaryotic translation initiation factor 3 subunit B (TIF3B1).